The sequence spans 895 residues: DNA double-strand break repair Rad50 ATPase (895 aa).

ATP-binding positions include 32-38 (NGAGKSS) and Gln137. The stretch at 183–253 (SDYDYLKNEL…LNAQLETIKK (71 aa)) forms a coiled coil. One can recognise a Zinc-hook domain in the interval 411–507 (RAEINSSLMQ…ERKHQKKLLD (97 aa)). Zn(2+) is bound by residues Cys455 and Cys458. Coiled-coil stretches lie at residues 464-510 (TEKS…DRIN) and 618-647 (ENSL…AMDE).

It belongs to the SMC family. RAD50 subfamily. As to quaternary structure, homodimer. Forms a heterotetramer composed of two Mre11 subunits and two Rad50 subunits. Requires Zn(2+) as cofactor.

Functionally, part of the Rad50/Mre11 complex, which is involved in the early steps of DNA double-strand break (DSB) repair. The complex may facilitate opening of the processed DNA ends to aid in the recruitment of HerA and NurA. Rad50 controls the balance between DNA end bridging and DNA resection via ATP-dependent structural rearrangements of the Rad50/Mre11 complex. The chain is DNA double-strand break repair Rad50 ATPase from Thermoplasma volcanium (strain ATCC 51530 / DSM 4299 / JCM 9571 / NBRC 15438 / GSS1).